We begin with the raw amino-acid sequence, 258 residues long: Bidirectional sugar transporter SWEET7 (258 aa).

The Extracellular segment spans residues 1–11 (MVFAHLNLLRK). The helical transmembrane segment at 12–32 (IVGIIGNFIALCLFLSPTPTF) threads the bilayer. A MtN3/slv 1 domain is found at 12–100 (IVGIIGNFIA…IFFVYCGRQK (89 aa)). At 33 to 46 (VRIVKKKSVEEYSP) the chain is on the cytoplasmic side. The helical transmembrane segment at 47-67 (IPYLATLINCLVWVLYGLPTV) threads the bilayer. Residues 68–73 (HPDSTL) lie on the Extracellular side of the membrane. Residues 74–94 (VITINGTGILIEIVFLTIFFV) traverse the membrane as a helical segment. Over 95–102 (YCGRQKQR) the chain is Cytoplasmic. Residues 103-123 (LIISAVIAAETAFIAILAVLV) form a helical membrane-spanning segment. Topologically, residues 124–134 (LTLQHTTEKRT) are extracellular. The helical transmembrane segment at 135 to 155 (MSVGIVCCVFNVMMYASPLSV) threads the bilayer. The MtN3/slv 2 domain occupies 136-221 (SVGIVCCVFN…LYGAYYKSTK (86 aa)). Residues 156 to 166 (MKMVIKTKSVE) are Cytoplasmic-facing. Residues 167 to 187 (FMPFWLSVAGFLNAGVWTIYA) traverse the membrane as a helical segment. Over 188-193 (LMPFDP) the chain is Extracellular. A helical transmembrane segment spans residues 194-214 (FMAIPNGIGCLFGLAQLILYG). The Cytoplasmic portion of the chain corresponds to 215 to 258 (AYYKSTKRIMAERENQPGYVGLSSAIARTGSEKTANTNQEPNNV).

It belongs to the SWEET sugar transporter family. Forms heterooligomers with SWEET8, SWEET11, SWEET13, SWEET16 and SWEET17.

It is found in the cell membrane. Mediates both low-affinity uptake and efflux of sugar across the plasma membrane. The protein is Bidirectional sugar transporter SWEET7 of Arabidopsis thaliana (Mouse-ear cress).